The sequence spans 427 residues: Hydroxylamine reductase (427 aa).

[4Fe-4S] cluster-binding residues include cysteine 3, cysteine 6, cysteine 15, and cysteine 21. Hybrid [4Fe-2O-2S] cluster-binding residues include histidine 129, glutamate 153, cysteine 197, cysteine 283, cysteine 311, cysteine 336, glutamate 370, and lysine 372. Cysteine 283 is modified (cysteine persulfide).

It belongs to the HCP family. [4Fe-4S] cluster is required as a cofactor. Hybrid [4Fe-2O-2S] cluster serves as cofactor.

It localises to the cytoplasm. It carries out the reaction A + NH4(+) + H2O = hydroxylamine + AH2 + H(+). Its function is as follows. Catalyzes the reduction of hydroxylamine to form NH(3) and H(2)O. In Methanothermobacter thermautotrophicus (strain ATCC 29096 / DSM 1053 / JCM 10044 / NBRC 100330 / Delta H) (Methanobacterium thermoautotrophicum), this protein is Hydroxylamine reductase.